Reading from the N-terminus, the 374-residue chain is P2Y purinoceptor 11 (374 aa).

The Extracellular portion of the chain corresponds to 1–29 (MAANVSGAKSCPANFLAAADDKLSGFQGD). N-linked (GlcNAc...) asparagine glycosylation is present at Asn4. A helical membrane pass occupies residues 30-50 (FLWPILVVEFLVAVASNGLAL). The Cytoplasmic portion of the chain corresponds to 51–64 (YRFSIRKQRPWHPA). Residues 65 to 85 (VVFSVQLAVSDLLCALTLPPL) traverse the membrane as a helical segment. At 86 to 116 (AAYLYPPKHWRYGEAACRLERFLFTCNLLGS) the chain is on the extracellular side. An intrachain disulfide couples Cys102 to Cys180. Residues 117–137 (VIFITCISLNRYLGIVHPFFA) traverse the membrane as a helical segment. Residues 138 to 146 (RSHLRPKHA) lie on the Cytoplasmic side of the membrane. Residues 147–167 (WAVSAAGWVLAALLAMPTLSF) form a helical membrane-spanning segment. Over 168 to 206 (SHLKRPQQGAGNCSVARPEACIKCLGTADHGLAAYRAYS) the chain is Extracellular. A glycan (N-linked (GlcNAc...) asparagine) is linked at Asn179. The helical transmembrane segment at 207–227 (LVLAGLGCGLPLLLTLAAYGA) threads the bilayer. Topologically, residues 228–245 (LGRAVLRSPGMTVAEKLR) are cytoplasmic. The chain crosses the membrane as a helical span at residues 246 to 266 (VAALVASGVALYASSYVPYHI). The Extracellular segment spans residues 267–308 (MRVLNVDARRRWSTRCPSFADIAQATAALELGPYVGYQVMRG). A helical transmembrane segment spans residues 309–329 (LMPLAFCVHPLLYMAAVPSLG). The Cytoplasmic segment spans residues 330–374 (CCCRHCPGYRDSWNPEDAKSTGQALPLNATAAPKPSEPQSRELSQ). Residues 345–374 (EDAKSTGQALPLNATAAPKPSEPQSRELSQ) are disordered.

The protein belongs to the G-protein coupled receptor 1 family. As to expression, highest expression in liver and spleen.

It localises to the cell membrane. In terms of biological role, receptor for ATP and ADP coupled to G-proteins that activate both phosphatidylinositol-calcium and adenylyl cyclase second messenger systems. Not activated by UTP or UDP. The protein is P2Y purinoceptor 11 (P2RY11) of Homo sapiens (Human).